We begin with the raw amino-acid sequence, 100 residues long: Large ribosomal subunit protein uL23 (100 aa).

The protein belongs to the universal ribosomal protein uL23 family. Part of the 50S ribosomal subunit. Contacts protein L29, and trigger factor when it is bound to the ribosome.

One of the early assembly proteins it binds 23S rRNA. One of the proteins that surrounds the polypeptide exit tunnel on the outside of the ribosome. Forms the main docking site for trigger factor binding to the ribosome. The chain is Large ribosomal subunit protein uL23 from Pectobacterium atrosepticum (strain SCRI 1043 / ATCC BAA-672) (Erwinia carotovora subsp. atroseptica).